Reading from the N-terminus, the 236-residue chain is MEPDFQDAYHAFRTAEDEHQLFREIAAIARQLGFDYCCYGARMPLPVSKPAVAIFDTYPAGWMQHYQASGFLDIDPTVRAGASSSDLIVWPVSIRDDAARLWSDARDAGLNIGVARSSWTAHGAFGLLTLARHADPLTAAELGQLSIATHWLANLAHTLMSPFLVPQLVPESNAVLTTREREVLCWTGEGKTAYEIGQILRISERTVNFHVNNVLLKLAATNKVQAVVKAIATGLI.

The 66-residue stretch at 169–234 folds into the HTH luxR-type domain; it reads VPESNAVLTT…QAVVKAIATG (66 aa). A DNA-binding region (H-T-H motif) is located at residues 193–212; that stretch reads AYEIGQILRISERTVNFHVN.

The protein belongs to the autoinducer-regulated transcriptional regulatory protein family.

The chain is Transcriptional activator protein SolR (solR) from Ralstonia solanacearum (Pseudomonas solanacearum).